Here is a 357-residue protein sequence, read N- to C-terminus: Peptide chain release factor 1 (357 aa).

Gln234 carries the N5-methylglutamine modification.

The protein belongs to the prokaryotic/mitochondrial release factor family. Methylated by PrmC. Methylation increases the termination efficiency of RF1.

The protein localises to the cytoplasm. Functionally, peptide chain release factor 1 directs the termination of translation in response to the peptide chain termination codons UAG and UAA. This is Peptide chain release factor 1 from Lactococcus lactis subsp. cremoris (strain MG1363).